Here is a 261-residue protein sequence, read N- to C-terminus: Imidazole glycerol phosphate synthase subunit HisF (261 aa).

Residues aspartate 16 and aspartate 135 contribute to the active site.

Belongs to the HisA/HisF family. In terms of assembly, heterodimer of HisH and HisF.

It localises to the cytoplasm. The enzyme catalyses 5-[(5-phospho-1-deoxy-D-ribulos-1-ylimino)methylamino]-1-(5-phospho-beta-D-ribosyl)imidazole-4-carboxamide + L-glutamine = D-erythro-1-(imidazol-4-yl)glycerol 3-phosphate + 5-amino-1-(5-phospho-beta-D-ribosyl)imidazole-4-carboxamide + L-glutamate + H(+). It participates in amino-acid biosynthesis; L-histidine biosynthesis; L-histidine from 5-phospho-alpha-D-ribose 1-diphosphate: step 5/9. IGPS catalyzes the conversion of PRFAR and glutamine to IGP, AICAR and glutamate. The HisF subunit catalyzes the cyclization activity that produces IGP and AICAR from PRFAR using the ammonia provided by the HisH subunit. This chain is Imidazole glycerol phosphate synthase subunit HisF, found in Mycobacterium ulcerans (strain Agy99).